Consider the following 235-residue polypeptide: Lipoprotein-releasing system ATP-binding protein LolD 1 (235 aa).

The region spanning 5–234 is the ABC transporter domain; that stretch reads FEARGITKSY…DGRLQLCTPL (230 aa). 42 to 49 serves as a coordination point for ATP; sequence GASGSGKT.

It belongs to the ABC transporter superfamily. Lipoprotein translocase (TC 3.A.1.125) family. In terms of assembly, the complex is composed of two ATP-binding proteins (LolD) and two transmembrane proteins (LolC and LolE).

The protein localises to the cell inner membrane. Part of the ABC transporter complex LolCDE involved in the translocation of mature outer membrane-directed lipoproteins, from the inner membrane to the periplasmic chaperone, LolA. Responsible for the formation of the LolA-lipoprotein complex in an ATP-dependent manner. This Chlorobium luteolum (strain DSM 273 / BCRC 81028 / 2530) (Pelodictyon luteolum) protein is Lipoprotein-releasing system ATP-binding protein LolD 1.